A 270-amino-acid polypeptide reads, in one-letter code: Regulatory protein RecX (270 aa).

The protein belongs to the RecX family.

The protein resides in the cytoplasm. Its function is as follows. Modulates RecA activity. The chain is Regulatory protein RecX from Bacillus mycoides (strain KBAB4) (Bacillus weihenstephanensis).